A 405-amino-acid chain; its full sequence is Probable tRNA sulfurtransferase (405 aa).

The THUMP domain occupies 60–165; the sequence is TAVMDRLKGV…LNGVFLSGQT (106 aa). Residues 183-184, 208-209, Arg265, Gly287, and Gln296 each bind ATP; these read ML and HF.

This sequence belongs to the ThiI family.

It localises to the cytoplasm. The catalysed reaction is [ThiI sulfur-carrier protein]-S-sulfanyl-L-cysteine + a uridine in tRNA + 2 reduced [2Fe-2S]-[ferredoxin] + ATP + H(+) = [ThiI sulfur-carrier protein]-L-cysteine + a 4-thiouridine in tRNA + 2 oxidized [2Fe-2S]-[ferredoxin] + AMP + diphosphate. It catalyses the reaction [ThiS sulfur-carrier protein]-C-terminal Gly-Gly-AMP + S-sulfanyl-L-cysteinyl-[cysteine desulfurase] + AH2 = [ThiS sulfur-carrier protein]-C-terminal-Gly-aminoethanethioate + L-cysteinyl-[cysteine desulfurase] + A + AMP + 2 H(+). Its pathway is cofactor biosynthesis; thiamine diphosphate biosynthesis. Catalyzes the ATP-dependent transfer of a sulfur to tRNA to produce 4-thiouridine in position 8 of tRNAs, which functions as a near-UV photosensor. Also catalyzes the transfer of sulfur to the sulfur carrier protein ThiS, forming ThiS-thiocarboxylate. This is a step in the synthesis of thiazole, in the thiamine biosynthesis pathway. The sulfur is donated as persulfide by IscS. The polypeptide is Probable tRNA sulfurtransferase (Levilactobacillus brevis (strain ATCC 367 / BCRC 12310 / CIP 105137 / JCM 1170 / LMG 11437 / NCIMB 947 / NCTC 947) (Lactobacillus brevis)).